The chain runs to 65 residues: Large ribosomal subunit protein uL29 (65 aa).

This sequence belongs to the universal ribosomal protein uL29 family.

The chain is Large ribosomal subunit protein uL29 from Acinetobacter baumannii (strain AB307-0294).